Consider the following 435-residue polypeptide: Glutamate-1-semialdehyde 2,1-aminomutase (435 aa).

An N6-(pyridoxal phosphate)lysine modification is found at Lys-266.

It belongs to the class-III pyridoxal-phosphate-dependent aminotransferase family. HemL subfamily. In terms of assembly, homodimer. Requires pyridoxal 5'-phosphate as cofactor.

Its subcellular location is the cytoplasm. The catalysed reaction is (S)-4-amino-5-oxopentanoate = 5-aminolevulinate. The protein operates within porphyrin-containing compound metabolism; protoporphyrin-IX biosynthesis; 5-aminolevulinate from L-glutamyl-tRNA(Glu): step 2/2. This is Glutamate-1-semialdehyde 2,1-aminomutase from Coxiella burnetii (strain CbuK_Q154) (Coxiella burnetii (strain Q154)).